A 482-amino-acid polypeptide reads, in one-letter code: O-phosphoseryl-tRNA(Sec) selenium transferase (482 aa).

The segment at 1–36 (MKSSFGKKEGEYSRLVSKSSNKLLNSLWEKKQIPEE) is tetramerization. Position 69 (Arg-69) interacts with pyridoxal 5'-phosphate. Positions 90–100 (GRSGNLLEIQP) are phosphate loop (P-loop). Positions 91, 92, and 99 each coordinate substrate. Lys-277 carries the post-translational modification N6-(pyridoxal phosphate)lysine. Arg-306 provides a ligand contact to substrate. Arg-388 contributes to the tRNA binding site. Residues 461-482 (DRRGGSSGRRVPMNESFDMEND) are disordered.

It belongs to the SepSecS family. Homotetramer formed by a catalytic dimer and a non-catalytic dimer serving as a binding platform that orients tRNASec for catalysis. Each tetramer binds the CCA ends of two tRNAs which point to the active sites of the catalytic dimer. Pyridoxal 5'-phosphate is required as a cofactor.

Its subcellular location is the cytoplasm. The catalysed reaction is O-phospho-L-seryl-tRNA(Sec) + selenophosphate + H2O = L-selenocysteinyl-tRNA(Sec) + 2 phosphate. Its pathway is aminoacyl-tRNA biosynthesis; selenocysteinyl-tRNA(Sec) biosynthesis; selenocysteinyl-tRNA(Sec) from L-seryl-tRNA(Sec) (archaeal/eukaryal route): step 2/2. In terms of biological role, converts O-phosphoseryl-tRNA(Sec) to selenocysteinyl-tRNA(Sec) required for selenoprotein biosynthesis. The sequence is that of O-phosphoseryl-tRNA(Sec) selenium transferase (secs-1) from Caenorhabditis briggsae.